The primary structure comprises 469 residues: Proline--tRNA ligase (469 aa).

The protein belongs to the class-II aminoacyl-tRNA synthetase family. ProS type 3 subfamily. Homodimer.

The protein localises to the cytoplasm. It carries out the reaction tRNA(Pro) + L-proline + ATP = L-prolyl-tRNA(Pro) + AMP + diphosphate. Its function is as follows. Catalyzes the attachment of proline to tRNA(Pro) in a two-step reaction: proline is first activated by ATP to form Pro-AMP and then transferred to the acceptor end of tRNA(Pro). The sequence is that of Proline--tRNA ligase from Methanobrevibacter smithii (strain ATCC 35061 / DSM 861 / OCM 144 / PS).